The primary structure comprises 207 residues: Acyl-homoserine-lactone synthase (207 aa).

This sequence belongs to the autoinducer synthase family.

The catalysed reaction is a fatty acyl-[ACP] + S-adenosyl-L-methionine = an N-acyl-L-homoserine lactone + S-methyl-5'-thioadenosine + holo-[ACP] + H(+). Functionally, required for the synthesis of N-butanoyl-L-homoserine lactone (BHL), an autoinducer molecule which binds to AsaR. The sequence is that of Acyl-homoserine-lactone synthase (asaI) from Aeromonas salmonicida.